Consider the following 176-residue polypeptide: MAIIGIFFGSDTGNTENIAKMIQKQLGKDVADVHDIAKSSKEDLEAHDILLLGIPTWYYGEAQCDWDDFFPTLEEIDFNGKLVALFGCGDQEDYAEYFCDALGTIRDIIEPRGATIVGHWPTAGYHFEASKGLADDDHFVGLAIDEDRQPELTNERVEKWVKQVAEELHLEEIKNA.

Positions 4-165 (IGIFFGSDTG…RVEKWVKQVA (162 aa)) constitute a Flavodoxin-like domain.

It belongs to the flavodoxin family. FMN serves as cofactor.

Functionally, low-potential electron donor to a number of redox enzymes. This Klebsiella pneumoniae protein is Flavodoxin (fldA).